Reading from the N-terminus, the 306-residue chain is MISSFTSLGSRPLLLSSGIAVTAAAAVYFSTGSRLANEALHNKTFKGFKGPASTWVDLPLVKFEDLSHDTRKFTFKLPNDDDVSGISPLSFLLARPHGTWSLRGIRPYTPVSLPETQGVIEFVIKHVPNGGMSSHMFSLKPNDTVSFTGPIVKYEWKQNKFDSVTLLGAGSGITPLYQLMGSILSNPEDKTKINLFYANKTSDDILLKKELDEFQQKFSDRVKIHYYLSQPKTKDIASTGAKKGFIAKEDIESLAPASNENTHVFVCGPEPFVKAYAGQQGPLFFQGSFGGILKELGYTKSQVFKV.

The helical transmembrane segment at 12–32 (PLLLSSGIAVTAAAAVYFSTG) threads the bilayer. In terms of domain architecture, FAD-binding FR-type spans 53–157 (STWVDLPLVK…TGPIVKYEWK (105 aa)). FAD is bound at residue 160 to 195 (KFDSVTLLGAGSGITPLYQLMGSILSNPEDKTKINL).

Belongs to the flavoprotein pyridine nucleotide cytochrome reductase family. FAD is required as a cofactor.

It localises to the mitochondrion outer membrane. The enzyme catalyses 2 Fe(III)-[cytochrome b5] + NADH = 2 Fe(II)-[cytochrome b5] + NAD(+) + H(+). Its function is as follows. May mediate the reduction of outer membrane cytochrome b5. This Vanderwaltozyma polyspora (strain ATCC 22028 / DSM 70294 / BCRC 21397 / CBS 2163 / NBRC 10782 / NRRL Y-8283 / UCD 57-17) (Kluyveromyces polysporus) protein is NADH-cytochrome b5 reductase 2-B (MCR1B).